A 957-amino-acid polypeptide reads, in one-letter code: UvrABC system protein A (957 aa).

33-40 (GLSGSGKS) is an ATP binding site. Residues 252–279 (CPHCGFSIGELEPRLFSFNSPFGACPTC) form a C4-type zinc finger. ABC transporter domains lie at 309–587 (WTPI…PNSL) and 607–935 (PDGR…RYLK). ATP is bound at residue 639–646 (GVSGSGKS). Residues 738–764 (CEACRGDGIIKIEMHFLPDVYVPCEVC) form a C4-type zinc finger.

Belongs to the ABC transporter superfamily. UvrA family. Forms a heterotetramer with UvrB during the search for lesions.

The protein localises to the cytoplasm. The UvrABC repair system catalyzes the recognition and processing of DNA lesions. UvrA is an ATPase and a DNA-binding protein. A damage recognition complex composed of 2 UvrA and 2 UvrB subunits scans DNA for abnormalities. When the presence of a lesion has been verified by UvrB, the UvrA molecules dissociate. This chain is UvrABC system protein A, found in Bacillus subtilis (strain 168).